A 288-amino-acid polypeptide reads, in one-letter code: uncharacterized protein (288 aa).

An N-terminal signal peptide occupies residues 1–27 (MKFEFRTLVLISLAVVVVLSGCSQSPS). Positions 144 to 167 (GESGEAGGAGEQLPASDQASGEEP) are disordered.

This is an uncharacterized protein from Archaeoglobus fulgidus (strain ATCC 49558 / DSM 4304 / JCM 9628 / NBRC 100126 / VC-16).